Here is a 367-residue protein sequence, read N- to C-terminus: Glutamate 5-kinase (367 aa).

Residue Lys-10 participates in ATP binding. Ser-50, Asp-137, and Asn-149 together coordinate substrate. 169-170 is an ATP binding site; that stretch reads TD. One can recognise a PUA domain in the interval 275 to 353; sequence AGEITVDEGA…QQIDAILGYE (79 aa).

This sequence belongs to the glutamate 5-kinase family.

The protein localises to the cytoplasm. It catalyses the reaction L-glutamate + ATP = L-glutamyl 5-phosphate + ADP. The protein operates within amino-acid biosynthesis; L-proline biosynthesis; L-glutamate 5-semialdehyde from L-glutamate: step 1/2. Its function is as follows. Catalyzes the transfer of a phosphate group to glutamate to form L-glutamate 5-phosphate. This chain is Glutamate 5-kinase, found in Salmonella paratyphi B (strain ATCC BAA-1250 / SPB7).